We begin with the raw amino-acid sequence, 78 residues long: Small ribosomal subunit protein uS17 (78 aa).

Belongs to the universal ribosomal protein uS17 family. In terms of assembly, part of the 30S ribosomal subunit.

Its function is as follows. One of the primary rRNA binding proteins, it binds specifically to the 5'-end of 16S ribosomal RNA. In Sinorhizobium fredii (strain NBRC 101917 / NGR234), this protein is Small ribosomal subunit protein uS17.